The primary structure comprises 478 residues: Probable cyclin-dependent kinase 9 (478 aa).

Positions 1-17 are enriched in polar residues; sequence MSAQNYHAGLHQSSTQR. Residues 1-55 form a disordered region; that stretch reads MSAQNYHAGLHQSSTQRPPKRPNTEHAQEPPKRALIGGQTTPSSSGGGQTPNGTN. The segment covering 22–32 has biased composition (basic and acidic residues); the sequence is PNTEHAQEPPK. Residues 85–413 enclose the Protein kinase domain; sequence YEKLNKIGQG…SDEAEDDIWF (329 aa). ATP is bound by residues 91–99 and K114; that span reads IGQGTFGEV. The active-site Proton acceptor is the D217. Residues 444 to 478 form a disordered region; sequence HANRGRHQNAQQRPNQQQARPSNAIPAGQYRDTIF. The span at 451–464 shows a compositional bias: low complexity; sequence QNAQQRPNQQQARP.

This sequence belongs to the protein kinase superfamily. CMGC Ser/Thr protein kinase family. CDC2/CDKX subfamily. In terms of assembly, associates with cyclin-T (cit-1.1 or cit-1.2) to form P-TEFb.

Its subcellular location is the nucleus. The enzyme catalyses L-seryl-[protein] + ATP = O-phospho-L-seryl-[protein] + ADP + H(+). It catalyses the reaction L-threonyl-[protein] + ATP = O-phospho-L-threonyl-[protein] + ADP + H(+). The catalysed reaction is [DNA-directed RNA polymerase] + ATP = phospho-[DNA-directed RNA polymerase] + ADP + H(+). In terms of biological role, essential member of the cyclin-dependent kinase pair (CDK9/cyclin-T) complex, also called positive transcription elongation factor B (P-TEFb), which is proposed to facilitate the transition from abortive to production elongation by phosphorylating the CTD (C-terminal domain) of the large subunit of RNA polymerase II (RNAP II) and spt-5. In Caenorhabditis elegans, this protein is Probable cyclin-dependent kinase 9 (cdk-9).